The following is a 406-amino-acid chain: MSQPITRENFDEWMIPVYAPAPFIPVRGEGSRLWDQQGKEYIDFAGGIAVNALGHAHPELREALNEQASKFWHTGNGYTNEPVLRLAKKLIDATFADRVFFCNSGAEANEAALKLARKFAHDRYGSHKSGIMAFKNAFHGRTLFTVSAGGQPAYSQDFAPLPPDIRHAAYNDINSASALIDDATCAVIVEPIQGEGGVVPASNAFLQGLRELCDRHNALLIFDEVQTGVGRTGELYAYMHYGVTPDLLTTAKALGGDFPVGALLTTEECASVMTVGTHGTTYGGNPLASAVAGKVLELINTPEMLNGVKQRHDWFVERLNTINHRYGLFSEVRGLGLLIGCVLNADYAGQAKQISQEAAKAGVMVLIAGGNVVRFAPALNVSEEEVTTGLDRFAAACEHFVSRGSS.

Lysine 252 bears the N6-(pyridoxal phosphate)lysine mark.

It belongs to the class-III pyridoxal-phosphate-dependent aminotransferase family. AstC subfamily. Pyridoxal 5'-phosphate is required as a cofactor.

It carries out the reaction N(2)-succinyl-L-ornithine + 2-oxoglutarate = N-succinyl-L-glutamate 5-semialdehyde + L-glutamate. It participates in amino-acid degradation; L-arginine degradation via AST pathway; L-glutamate and succinate from L-arginine: step 3/5. Functionally, catalyzes the transamination of N(2)-succinylornithine and alpha-ketoglutarate into N(2)-succinylglutamate semialdehyde and glutamate. Can also act as an acetylornithine aminotransferase. This chain is Succinylornithine transaminase, found in Shigella boydii serotype 18 (strain CDC 3083-94 / BS512).